The sequence spans 424 residues: Isovaleryl-CoA dehydrogenase, mitochondrial (424 aa).

The N-terminal 30 residues, 1–30 (MATAVRLLGRRVSSWRLRPLPSPLAVPQRA), are a transit peptide targeting the mitochondrion. 3 positions are modified to N6-acetyllysine; alternate: K56, K65, and K76. 3 positions are modified to N6-succinyllysine; alternate: K56, K65, and K76. FAD is bound by residues 163-172 (LAMSEPNAGS) and 196-198 (WIT). S172 contacts substrate. Residue 220-221 (SR) participates in substrate binding. K239 is modified (N6-acetyllysine). An N6-acetyllysine; alternate modification is found at K260. K260 is modified (N6-succinyllysine; alternate). Residues Y275 and 282–285 (DLER) contribute to the substrate site. Residue E284 is the Proton acceptor of the active site. R310 lines the FAD pocket. Residue K316 is modified to N6-succinyllysine. FAD-binding positions include Q321 and 378-382 (QCLGG). Residue 405–406 (GG) coordinates substrate. Position 407-409 (407-409 (TSE)) interacts with FAD.

It belongs to the acyl-CoA dehydrogenase family. In terms of assembly, homotetramer. FAD serves as cofactor.

Its subcellular location is the mitochondrion matrix. The catalysed reaction is 3-methylbutanoyl-CoA + oxidized [electron-transfer flavoprotein] + H(+) = 3-methylbut-2-enoyl-CoA + reduced [electron-transfer flavoprotein]. It carries out the reaction pentanoyl-CoA + oxidized [electron-transfer flavoprotein] + H(+) = (2E)-pentenoyl-CoA + reduced [electron-transfer flavoprotein]. The enzyme catalyses hexanoyl-CoA + oxidized [electron-transfer flavoprotein] + H(+) = (2E)-hexenoyl-CoA + reduced [electron-transfer flavoprotein]. It catalyses the reaction butanoyl-CoA + oxidized [electron-transfer flavoprotein] + H(+) = (2E)-butenoyl-CoA + reduced [electron-transfer flavoprotein]. Its pathway is amino-acid degradation; L-leucine degradation; (S)-3-hydroxy-3-methylglutaryl-CoA from 3-isovaleryl-CoA: step 1/3. Functionally, catalyzes the conversion of isovaleryl-CoA/3-methylbutanoyl-CoA to 3-methylbut-2-enoyl-CoA as an intermediate step in the leucine (Leu) catabolic pathway. To a lesser extent, is also able to catalyze the oxidation of other saturated short-chain acyl-CoA thioesters as pentanoyl-CoA, hexenoyl-CoA and butenoyl-CoA. The protein is Isovaleryl-CoA dehydrogenase, mitochondrial (Ivd) of Rattus norvegicus (Rat).